Reading from the N-terminus, the 153-residue chain is NAD(P)H-quinone oxidoreductase subunit N (153 aa).

Belongs to the complex I NdhN subunit family. NDH-1 can be composed of about 15 different subunits; different subcomplexes with different compositions have been identified which probably have different functions.

The protein resides in the cellular thylakoid membrane. It catalyses the reaction a plastoquinone + NADH + (n+1) H(+)(in) = a plastoquinol + NAD(+) + n H(+)(out). The enzyme catalyses a plastoquinone + NADPH + (n+1) H(+)(in) = a plastoquinol + NADP(+) + n H(+)(out). NDH-1 shuttles electrons from an unknown electron donor, via FMN and iron-sulfur (Fe-S) centers, to quinones in the respiratory and/or the photosynthetic chain. The immediate electron acceptor for the enzyme in this species is believed to be plastoquinone. Couples the redox reaction to proton translocation, and thus conserves the redox energy in a proton gradient. Cyanobacterial NDH-1 also plays a role in inorganic carbon-concentration. In Synechococcus sp. (strain WH7803), this protein is NAD(P)H-quinone oxidoreductase subunit N.